We begin with the raw amino-acid sequence, 151 residues long: uncharacterized protein (151 aa).

This is an uncharacterized protein from Bacillus subtilis (strain 168).